The chain runs to 170 residues: Ankyrin repeat-containing protein C105.02c (170 aa).

ANK repeat units lie at residues 46–76 (LGND…NLNN) and 81–116 (TGDT…DPLL). A disordered region spans residues 150-170 (SADVVADDDDEEEGSGESDEE). A compositionally biased stretch (acidic residues) spans 154-170 (VADDDDEEEGSGESDEE).

The protein localises to the cytoplasm. It is found in the nucleus. This is Ankyrin repeat-containing protein C105.02c from Schizosaccharomyces pombe (strain 972 / ATCC 24843) (Fission yeast).